A 182-amino-acid polypeptide reads, in one-letter code: ATP synthase subunit delta (182 aa).

Belongs to the ATPase delta chain family. As to quaternary structure, F-type ATPases have 2 components, F(1) - the catalytic core - and F(0) - the membrane proton channel. F(1) has five subunits: alpha(3), beta(3), gamma(1), delta(1), epsilon(1). F(0) has three main subunits: a(1), b(2) and c(10-14). The alpha and beta chains form an alternating ring which encloses part of the gamma chain. F(1) is attached to F(0) by a central stalk formed by the gamma and epsilon chains, while a peripheral stalk is formed by the delta and b chains.

The protein resides in the cell inner membrane. In terms of biological role, f(1)F(0) ATP synthase produces ATP from ADP in the presence of a proton or sodium gradient. F-type ATPases consist of two structural domains, F(1) containing the extramembraneous catalytic core and F(0) containing the membrane proton channel, linked together by a central stalk and a peripheral stalk. During catalysis, ATP synthesis in the catalytic domain of F(1) is coupled via a rotary mechanism of the central stalk subunits to proton translocation. This protein is part of the stalk that links CF(0) to CF(1). It either transmits conformational changes from CF(0) to CF(1) or is implicated in proton conduction. The chain is ATP synthase subunit delta from Cytophaga hutchinsonii (strain ATCC 33406 / DSM 1761 / CIP 103989 / NBRC 15051 / NCIMB 9469 / D465).